We begin with the raw amino-acid sequence, 389 residues long: Probable dual-specificity RNA methyltransferase RlmN (389 aa).

E114 acts as the Proton acceptor in catalysis. The Radical SAM core domain occupies 120–358 (QHYGLSVCVT…CVVRQEHGTD (239 aa)). A disulfide bridge connects residues C127 and C363. Residues C134, C138, and C141 each coordinate [4Fe-4S] cluster. S-adenosyl-L-methionine contacts are provided by residues 186 to 187 (GE), S218, 241 to 243 (SLH), and N319. Residue C363 is the S-methylcysteine intermediate of the active site. The segment at 370 to 389 (TMKRDRQKAVAEASGKSEGK) is disordered. Positions 371 to 389 (MKRDRQKAVAEASGKSEGK) are enriched in basic and acidic residues.

Belongs to the radical SAM superfamily. RlmN family. It depends on [4Fe-4S] cluster as a cofactor.

It is found in the cytoplasm. It carries out the reaction adenosine(2503) in 23S rRNA + 2 reduced [2Fe-2S]-[ferredoxin] + 2 S-adenosyl-L-methionine = 2-methyladenosine(2503) in 23S rRNA + 5'-deoxyadenosine + L-methionine + 2 oxidized [2Fe-2S]-[ferredoxin] + S-adenosyl-L-homocysteine. The enzyme catalyses adenosine(37) in tRNA + 2 reduced [2Fe-2S]-[ferredoxin] + 2 S-adenosyl-L-methionine = 2-methyladenosine(37) in tRNA + 5'-deoxyadenosine + L-methionine + 2 oxidized [2Fe-2S]-[ferredoxin] + S-adenosyl-L-homocysteine. Specifically methylates position 2 of adenine 2503 in 23S rRNA and position 2 of adenine 37 in tRNAs. This chain is Probable dual-specificity RNA methyltransferase RlmN, found in Streptococcus thermophilus (strain ATCC BAA-250 / LMG 18311).